The sequence spans 458 residues: Transmembrane protein 143 (458 aa).

The next 2 helical transmembrane spans lie at leucine 277–isoleucine 297 and leucine 298–valine 318. At serine 329 the chain carries Phosphoserine.

It localises to the membrane. The polypeptide is Transmembrane protein 143 (Tmem143) (Mus musculus (Mouse)).